The chain runs to 443 residues: ATP-dependent protease ATPase subunit HslU (443 aa).

Residues Ile20, 62-67 (GVGKTE), Asp255, Glu321, and Arg393 contribute to the ATP site.

This sequence belongs to the ClpX chaperone family. HslU subfamily. As to quaternary structure, a double ring-shaped homohexamer of HslV is capped on each side by a ring-shaped HslU homohexamer. The assembly of the HslU/HslV complex is dependent on binding of ATP.

The protein localises to the cytoplasm. ATPase subunit of a proteasome-like degradation complex; this subunit has chaperone activity. The binding of ATP and its subsequent hydrolysis by HslU are essential for unfolding of protein substrates subsequently hydrolyzed by HslV. HslU recognizes the N-terminal part of its protein substrates and unfolds these before they are guided to HslV for hydrolysis. The sequence is that of ATP-dependent protease ATPase subunit HslU from Helicobacter pylori (strain P12).